A 245-amino-acid chain; its full sequence is Eukaryotic translation initiation factor 6 (245 aa).

Serine 174 and serine 175 each carry phosphoserine; by CK1.

Belongs to the eIF-6 family. Monomer. Associates with the 60S ribosomal subunit. In terms of processing, phosphorylation at Ser-174 and Ser-175 promotes nuclear export.

It is found in the cytoplasm. The protein localises to the nucleus. The protein resides in the nucleolus. Functionally, binds to the 60S ribosomal subunit and prevents its association with the 40S ribosomal subunit to form the 80S initiation complex in the cytoplasm. Is also involved in ribosome biogenesis. Associates with pre-60S subunits in the nucleus and is involved in its nuclear export. The sequence is that of Eukaryotic translation initiation factor 6 from Candida albicans (strain SC5314 / ATCC MYA-2876) (Yeast).